We begin with the raw amino-acid sequence, 185 residues long: Peptidyl-tRNA hydrolase (185 aa).

Tyr-14 is a binding site for tRNA. The active-site Proton acceptor is the His-19. Phe-64, Asn-66, and Asn-112 together coordinate tRNA.

The protein belongs to the PTH family. In terms of assembly, monomer.

It localises to the cytoplasm. The catalysed reaction is an N-acyl-L-alpha-aminoacyl-tRNA + H2O = an N-acyl-L-amino acid + a tRNA + H(+). Hydrolyzes ribosome-free peptidyl-tRNAs (with 1 or more amino acids incorporated), which drop off the ribosome during protein synthesis, or as a result of ribosome stalling. Its function is as follows. Catalyzes the release of premature peptidyl moieties from peptidyl-tRNA molecules trapped in stalled 50S ribosomal subunits, and thus maintains levels of free tRNAs and 50S ribosomes. This is Peptidyl-tRNA hydrolase from Lactobacillus gasseri (strain ATCC 33323 / DSM 20243 / BCRC 14619 / CIP 102991 / JCM 1131 / KCTC 3163 / NCIMB 11718 / NCTC 13722 / AM63).